Reading from the N-terminus, the 326-residue chain is ATP phosphoribosyltransferase regulatory subunit (326 aa).

Belongs to the class-II aminoacyl-tRNA synthetase family. HisZ subfamily. In terms of assembly, heteromultimer composed of HisG and HisZ subunits.

It localises to the cytoplasm. The protein operates within amino-acid biosynthesis; L-histidine biosynthesis; L-histidine from 5-phospho-alpha-D-ribose 1-diphosphate: step 1/9. Required for the first step of histidine biosynthesis. May allow the feedback regulation of ATP phosphoribosyltransferase activity by histidine. The chain is ATP phosphoribosyltransferase regulatory subunit from Streptococcus thermophilus (strain ATCC BAA-491 / LMD-9).